The chain runs to 281 residues: NADPH-dependent 7-cyano-7-deazaguanine reductase (281 aa).

Residue 87 to 89 coordinates substrate; that stretch reads VES. 89-90 contributes to the NADPH binding site; sequence SK. The active-site Thioimide intermediate is cysteine 188. Aspartate 195 functions as the Proton donor in the catalytic mechanism. 227-228 is a binding site for substrate; the sequence is HE. 256–257 provides a ligand contact to NADPH; it reads RG.

Belongs to the GTP cyclohydrolase I family. QueF type 2 subfamily. In terms of assembly, homodimer.

It is found in the cytoplasm. It carries out the reaction 7-aminomethyl-7-carbaguanine + 2 NADP(+) = 7-cyano-7-deazaguanine + 2 NADPH + 3 H(+). Its pathway is tRNA modification; tRNA-queuosine biosynthesis. Functionally, catalyzes the NADPH-dependent reduction of 7-cyano-7-deazaguanine (preQ0) to 7-aminomethyl-7-deazaguanine (preQ1). The chain is NADPH-dependent 7-cyano-7-deazaguanine reductase from Aliivibrio fischeri (strain MJ11) (Vibrio fischeri).